The chain runs to 196 residues: dTTP/UTP pyrophosphatase (196 aa).

Residue Asp-73 is the Proton acceptor of the active site.

This sequence belongs to the Maf family. YhdE subfamily. A divalent metal cation is required as a cofactor.

Its subcellular location is the cytoplasm. The catalysed reaction is dTTP + H2O = dTMP + diphosphate + H(+). The enzyme catalyses UTP + H2O = UMP + diphosphate + H(+). In terms of biological role, nucleoside triphosphate pyrophosphatase that hydrolyzes dTTP and UTP. May have a dual role in cell division arrest and in preventing the incorporation of modified nucleotides into cellular nucleic acids. The chain is dTTP/UTP pyrophosphatase from Myxococcus xanthus (strain DK1622).